The chain runs to 91 residues: MTRSVKKGPFIDAHLLKKVEAAVQTKDKKPIKTWSRRSTILPDFIGLTIAVHNGRQHVPVYVTENMVGHKLGEFALTRTFKGHAADKKAKR.

Belongs to the universal ribosomal protein uS19 family.

Functionally, protein S19 forms a complex with S13 that binds strongly to the 16S ribosomal RNA. This chain is Small ribosomal subunit protein uS19, found in Ralstonia pickettii (strain 12J).